Consider the following 325-residue polypeptide: tRNA N6-adenosine threonylcarbamoyltransferase (325 aa).

Fe cation is bound by residues H111 and H115. Substrate contacts are provided by residues 134 to 138 (LISGG), D167, G180, and N277. D305 lines the Fe cation pocket.

It belongs to the KAE1 / TsaD family. Fe(2+) serves as cofactor.

The protein localises to the cytoplasm. Its subcellular location is the secreted. It carries out the reaction L-threonylcarbamoyladenylate + adenosine(37) in tRNA = N(6)-L-threonylcarbamoyladenosine(37) in tRNA + AMP + H(+). Required for the formation of a threonylcarbamoyl group on adenosine at position 37 (t(6)A37) in tRNAs that read codons beginning with adenine. Is involved in the transfer of the threonylcarbamoyl moiety of threonylcarbamoyl-AMP (TC-AMP) to the N6 group of A37, together with TsaE and TsaB. TsaD likely plays a direct catalytic role in this reaction. The protein is tRNA N6-adenosine threonylcarbamoyltransferase of Mannheimia haemolytica (Pasteurella haemolytica).